The following is a 707-amino-acid chain: Nucleolin (707 aa).

The segment at 1–308 is disordered; that stretch reads MVKLAKAGKT…KVEGSEPTTP (308 aa). K9, K15, and K16 each carry N6-acetyllysine. Over residues 24 to 46 the composition is skewed to acidic residues; the sequence is VEEDSEDEEMSEDEDDSSGEEEV. Phosphoserine is present on residues S28, S34, S40, and S41. Positions 56–92 are enriched in low complexity; that stretch reads ATTTPAKKVVVSQTKKAAVPTPAKKAAVTPGKKAVAT. Repeat 1 spans residues 58-65; sequence TTPAKKVV. Positions 58–135 are 8 X 8 AA tandem repeats of X-T-P-X-K-K-X-X; that stretch reads TTPAKKVVVS…GAATPAKGAK (78 aa). At S67 the chain carries Phosphoserine. Residues T69, T76, T84, and T92 each carry the phosphothreonine modification. Tandem repeats lie at residues 75–82, 83–90, and 91–98. An N6-acetyllysine modification is found at K96. A Phosphothreonine modification is found at T99. The 5; truncated repeat unit spans residues 99–104; that stretch reads TPAKVI. K102 carries the post-translational modification N6-acetyllysine. The stretch at 105–112 is repeat 6; that stretch reads PTPGKKGA. A Phosphothreonine modification is found at T106. N6-acetyllysine is present on residues K109 and K116. Repeat copies occupy residues 120–127 and 128–135. T121 is subject to Phosphothreonine. The span at 121 to 137 shows a compositional bias: low complexity; that stretch reads TPGKKGAATPAKGAKNG. Residue K124 is modified to N6-acetyllysine. A phosphoserine mark is found at S145 and S157. Over residues 145–170 the composition is skewed to acidic residues; it reads SDEDEDEEDEDDSDEDEDDEEEDEFE. Residues 179 to 188 show a composition bias toward low complexity; it reads PAKAAPAAPA. 2 positions are modified to phosphoserine: S189 and S212. A compositionally biased stretch (acidic residues) spans 189 to 217; that stretch reads SEDEEDDEDEDDEEDDDEEEEDDSEEEVM. Position 220 is a phosphothreonine (T220). Over residues 241-273 the composition is skewed to acidic residues; the sequence is EEEDDEEEDEDDEDEDDEEEDDEDDDEEEEEEE. The span at 286–302 shows a compositional bias: basic and acidic residues; the sequence is MTKQKEAPEAKKQKVEG. K299 is covalently cross-linked (Glycyl lysine isopeptide (Lys-Gly) (interchain with G-Cter in SUMO1); alternate). A Glycyl lysine isopeptide (Lys-Gly) (interchain with G-Cter in SUMO2); alternate cross-link involves residue K299. A Phosphoserine modification is found at S303. RRM domains follow at residues 309–385 and 395–468; these read FNLF…KPKG and RTLL…YTGE. At K320 the chain carries N6-acetyllysine. A Glycyl lysine isopeptide (Lys-Gly) (interchain with G-Cter in SUMO1); alternate cross-link involves residue K326. K326 is covalently cross-linked (Glycyl lysine isopeptide (Lys-Gly) (interchain with G-Cter in SUMO2); alternate). At K350 the chain carries N6-acetyllysine. Phosphoserine is present on S358. Position 369 is a phosphothreonine (T369). K372 participates in a covalent cross-link: Glycyl lysine isopeptide (Lys-Gly) (interchain with G-Cter in SUMO2). K379 participates in a covalent cross-link: Glycyl lysine isopeptide (Lys-Gly) (interchain with G-Cter in SUMO2); alternate. K379 is subject to N6-acetyllysine; alternate. K400 is modified (N6-acetyllysine). At S403 the chain carries Phosphoserine. Residue T407 is modified to Phosphothreonine. An N6-acetyllysine mark is found at K429 and K446. 2 positions are modified to phosphoserine: S460 and S462. N6-acetyllysine is present on residues K469 and K478. 2 RRM domains span residues 487-561 and 569-644; these read KTLV…LQGS and KTLF…WAKP. Residue K514 forms a Glycyl lysine isopeptide (Lys-Gly) (interchain with G-Cter in SUMO2); alternate linkage. Residue K514 is modified to N6-acetyllysine; alternate. N6-acetyllysine occurs at positions 522 and 569. Residue K574 forms a Glycyl lysine isopeptide (Lys-Gly) (interchain with G-Cter in SUMO2); alternate linkage. K574 is modified (N6-acetyllysine; alternate). A Phosphoserine modification is found at S577. K586 is covalently cross-linked (Glycyl lysine isopeptide (Lys-Gly) (interchain with G-Cter in SUMO1); alternate). K586 is covalently cross-linked (Glycyl lysine isopeptide (Lys-Gly) (interchain with G-Cter in SUMO2); alternate). Phosphoserine is present on residues S588 and S616. Residue K621 forms a Glycyl lysine isopeptide (Lys-Gly) (interchain with G-Cter in SUMO2) linkage. The segment at 639-707 is disordered; the sequence is LDWAKPKGEG…KPQGKKTKFE (69 aa). K643 is subject to N6-acetyllysine. Positions 647–696 are enriched in gly residues; that stretch reads EGGFGGRGGGRGGFGGRGGGRGGRGGFGGRGRGGFGGRGGFRGGRGGGGD. An asymmetric dimethylarginine mark is found at R653, R657, R663, R667, R670, R676, R678, R684, and R688. Position 691 is an asymmetric dimethylarginine; alternate (R691). Position 691 is an omega-N-methylarginine; alternate (R691).

Identified in a IGF2BP1-dependent mRNP granule complex containing untranslated mRNAs. Component of the SWAP complex that consists of NPM1, NCL/nucleolin, PARP1 and SWAP70. Component of a complex which is at least composed of HTATSF1/Tat-SF1, the P-TEFb complex components CDK9 and CCNT1, RNA polymerase II, SUPT5H, and NCL/nucleolin. Interacts with AICDA. Interacts with APTX. Interacts with C1QBP. Interacts with ERBB4. Interacts (via C-terminus) with FMR1 isoform 6 (via N-terminus). Interacts with GZF1; this interaction is important for nucleolar localization of GZF1. Interacts with NSUN2. Interacts with NVL. Interacts (via N-terminus domain) with SETX. Interacts (via RRM1 and C-terminal RRM4/Arg/Gly-rich domains) with TERT; the interaction is important for nucleolar localization of TERT. Interacts with WDR46. Interacts with ZFP36. Interacts with LRRC34. Interacts with RRP1B. Interacts with HNRNPU; this interaction occurs during mitosis. Interacts with RIOK1; RIOK1 recruits NCL to PRMT5 for symmetrically methylation. Interacts with ZBTB7B. Interacts with MDK; this interaction promotes NCL clustering and lateral movements of this complex into lipid rafts leading to MDK internalization. Interacts with HDGF. Interacts with ALKBH2. Interacts with IGFBP5; this interaction is necessary for IGFBP5 localization to the nucleus. Interacts with DDX24 (when ubiquitinated); this interaction may be important during ribosome biogenesis. Some glutamate residues are glycylated by TTLL8. This modification occurs exclusively on glutamate residues and results in a glycine chain on the gamma-carboxyl group. Post-translationally, symmetrically methylated by PRMT5. In terms of tissue distribution, expressed in B-cells that have been induced to switch to various Ig isotypes.

The protein resides in the nucleus. It localises to the nucleolus. Its subcellular location is the cytoplasm. Nucleolin is the major nucleolar protein of growing eukaryotic cells. It is found associated with intranucleolar chromatin and pre-ribosomal particles. It induces chromatin decondensation by binding to histone H1. It is thought to play a role in pre-rRNA transcription and ribosome assembly. May play a role in the process of transcriptional elongation. Binds RNA oligonucleotides with 5'-UUAGGG-3' repeats more tightly than the telomeric single-stranded DNA 5'-TTAGGG-3' repeats. This Mus musculus (Mouse) protein is Nucleolin (Ncl).